The following is a 403-amino-acid chain: Creatinase (403 aa).

The active site involves histidine 232.

Belongs to the peptidase M24 family. Creatinase subfamily. In terms of assembly, homodimer.

It catalyses the reaction creatine + H2O = sarcosine + urea. The chain is Creatinase from Pseudomonas putida (Arthrobacter siderocapsulatus).